An 860-amino-acid polypeptide reads, in one-letter code: Leucine--tRNA ligase (860 aa).

The 'HIGH' region signature appears at P42 to H52. A 'KMSKS' region motif is present at residues K619–S623. K622 serves as a coordination point for ATP.

Belongs to the class-I aminoacyl-tRNA synthetase family.

It is found in the cytoplasm. The catalysed reaction is tRNA(Leu) + L-leucine + ATP = L-leucyl-tRNA(Leu) + AMP + diphosphate. This is Leucine--tRNA ligase from Shigella sonnei (strain Ss046).